The primary structure comprises 195 residues: Dihydroneopterin triphosphate diphosphatase (195 aa).

The Proton acceptor role is filled by Asp-73.

This sequence belongs to the HAM1 NTPase family. Mn(2+) is required as a cofactor.

The enzyme catalyses 7,8-dihydroneopterin 3'-triphosphate + H2O = 7,8-dihydroneopterin 3'-phosphate + diphosphate + H(+). The protein operates within cofactor biosynthesis; tetrahydrofolate biosynthesis. Its function is as follows. Pyrophosphatase involved in the biosynthesis of tetrahydrofolate. Catalyzes the hydrolysis of dihydroneopterin triphosphate (DHNTP) to dihydroneopterin monophosphate (DHNMP) and pyrophosphate. Shows a strict substrate specificity. Has only weak activity with GTP, ITP, XTP and dTTP, and cannot use ATP, UTP, CTP, NAD(+), NADH, diadenosine triphosphate, diadenosine tetraphosphate, ADP-ribose and UDP-glucose. This chain is Dihydroneopterin triphosphate diphosphatase, found in Limosilactobacillus reuteri (strain DSM 20016) (Lactobacillus reuteri).